We begin with the raw amino-acid sequence, 437 residues long: Beta-1,3-galactosyl-O-glycosyl-glycoprotein beta-1,6-N-acetylglucosaminyltransferase 3 (437 aa).

Residues 1-12 (MTSWQRLCWHYR) are Cytoplasmic-facing. A helical; Signal-anchor for type II membrane protein membrane pass occupies residues 13-30 (LWTLGCYMLLAILALKLS). At 31 to 437 (LRLKCDFDAM…RHKAIYGTEL (407 aa)) the chain is on the lumenal side. Intrachain disulfides connect cysteine 70–cysteine 227, cysteine 161–cysteine 381, cysteine 182–cysteine 209, and cysteine 390–cysteine 422. Asparagine 288 is a glycosylation site (N-linked (GlcNAc...) asparagine).

Belongs to the glycosyltransferase 14 family. Post-translationally, N-glycosylated.

Its subcellular location is the golgi apparatus membrane. The catalysed reaction is a 3-O-[beta-D-galactosyl-(1-&gt;3)-N-acetyl-alpha-D-galactosaminyl]-L-seryl-[protein] + UDP-N-acetyl-alpha-D-glucosamine = 3-O-{beta-D-galactosyl-(1-&gt;3)-[N-acetyl-beta-D-glucosaminyl-(1-&gt;6)]-N-acetyl-alpha-D-galactosaminyl}-L-seryl-[protein] + UDP + H(+). It carries out the reaction a 3-O-[beta-D-galactosyl-(1-&gt;3)-N-acetyl-alpha-D-galactosaminyl]-L-threonyl-[protein] + UDP-N-acetyl-alpha-D-glucosamine = a 3-O-{beta-D-galactosyl-(1-&gt;3)-[N-acetyl-beta-D-glucosaminyl-(1-&gt;6)]-N-acetyl-alpha-D-galactosaminyl}-L-threonyl-[protein] + UDP + H(+). It catalyses the reaction a beta-D-Gal-(1-&gt;4)-beta-D-GlcNAc-(1-&gt;3)-beta-D-Gal-(1-&gt;4)-beta-D-GlcNAc derivative + UDP-N-acetyl-alpha-D-glucosamine = a beta-D-Gal-(1-&gt;4)-beta-D-GlcNAc-(1-&gt;3)-[beta-D-GlcNAc-(1-&gt;6)]-beta-D-Gal-(1-&gt;4)-N-acetyl-beta-D-glucosaminyl derivative + UDP + H(+). The enzyme catalyses 3-O-[N-acetyl-beta-D-glucosaminyl-(1-&gt;3)-N-acetyl-alpha-D-galactosaminyl]-L-seryl-[protein] + UDP-N-acetyl-alpha-D-glucosamine = 3-O-[N-acetyl-beta-D-glucosaminyl-(1-&gt;3)-[N-acetyl-beta-D-glucosaminyl-(1-&gt;6)]-N-acetyl-alpha-D-galactosaminyl]-L-seryl-[protein] + UDP + H(+). The catalysed reaction is a 3-O-[N-acetyl-beta-D-glucosaminyl-(1-&gt;3)-N-acetyl-alpha-D-galactosaminyl]-L-threonyl-[protein] + UDP-N-acetyl-alpha-D-glucosamine = 3-O-[N-acetyl-beta-D-glucosaminyl-(1-&gt;3)-[N-acetyl-beta-D-glucosaminyl-(1-&gt;6)]-N-acetyl-alpha-D-galactosaminyl]-L-threonyl-[protein] + UDP + H(+). It functions in the pathway protein modification; protein glycosylation. Its function is as follows. Glycosyltransferase that can synthesize all known mucin beta 6 N-acetylglucosaminides. Mediates core 2 and core 4 O-glycan branching, 2 important steps in mucin-type biosynthesis. Also has I-branching enzyme activity by converting linear into branched poly-N-acetyllactosaminoglycans, leading to introduce the blood group I antigen during embryonic development. In Mus musculus (Mouse), this protein is Beta-1,3-galactosyl-O-glycosyl-glycoprotein beta-1,6-N-acetylglucosaminyltransferase 3 (Gcnt3).